The following is a 689-amino-acid chain: uncharacterized protein (689 aa).

Disordered regions lie at residues 121 to 206 (LALK…VDPS), 286 to 305 (ASSN…PMDN), 322 to 414 (NSYS…SMAH), and 552 to 611 (AAMP…HLSD). A compositionally biased stretch (low complexity) spans 133–158 (SPNNSIPLMANSCLLSADNSSSSTTS). Polar residues predominate over residues 322–380 (NSYSYDRYTPNQPSYLESKPGNHQPSYTSEQPMYSTASVPQQISNGPTAVNGLPMNSYT). Composition is skewed to low complexity over residues 381–411 (PHSN…SSPS) and 560–572 (PSAH…PSPH).

The protein localises to the cytoplasm. This is an uncharacterized protein from Schizosaccharomyces pombe (strain 972 / ATCC 24843) (Fission yeast).